The chain runs to 201 residues: Imidazole glycerol phosphate synthase subunit HisH 1 (201 aa).

Residues 1–201 (MIALIDYKAG…LKLLENFARL (201 aa)) form the Glutamine amidotransferase type-1 domain. The active-site Nucleophile is the Cys80. Catalysis depends on residues His183 and Glu185.

Heterodimer of HisH and HisF.

The protein localises to the cytoplasm. The enzyme catalyses 5-[(5-phospho-1-deoxy-D-ribulos-1-ylimino)methylamino]-1-(5-phospho-beta-D-ribosyl)imidazole-4-carboxamide + L-glutamine = D-erythro-1-(imidazol-4-yl)glycerol 3-phosphate + 5-amino-1-(5-phospho-beta-D-ribosyl)imidazole-4-carboxamide + L-glutamate + H(+). It carries out the reaction L-glutamine + H2O = L-glutamate + NH4(+). Its pathway is amino-acid biosynthesis; L-histidine biosynthesis; L-histidine from 5-phospho-alpha-D-ribose 1-diphosphate: step 5/9. IGPS catalyzes the conversion of PRFAR and glutamine to IGP, AICAR and glutamate. The HisH subunit provides the glutamine amidotransferase activity that produces the ammonia necessary to HisF for the synthesis of IGP and AICAR. The chain is Imidazole glycerol phosphate synthase subunit HisH 1 (hisH1) from Campylobacter jejuni subsp. jejuni serotype O:23/36 (strain 81-176).